Here is a 1413-residue protein sequence, read N- to C-terminus: ABC transporter G family member 33 (1413 aa).

The segment covering 1–10 (MGSSFRSSSS) has biased composition (low complexity). Positions 1–21 (MGSSFRSSSSRNEHEDGGDEA) are disordered. The segment covering 11–21 (RNEHEDGGDEA) has biased composition (basic and acidic residues). The ABC transporter 1 domain maps to 140–412 (LKLSGVRTNE…FEECGFQCPE (273 aa)). 172 to 179 (GPPGCGKT) serves as a coordination point for ATP. Residues 490–702 (ELFRACISRE…AEIGLSVNEF (213 aa)) enclose the ABC transmembrane type-2 1 domain. 6 helical membrane passes run 509-529 (VYLFKTFQLVLAAIITMTVFI), 546-566 (CLFFATVVLLVDGIPELSMTV), 580-600 (FYPAWAYAIPATVLKIPLSFF), 626-646 (FMILFAVHFTSISMFRCIAAI), 652-672 (AAMTAGSFVMLITFVFAGFAI), and 738-758 (LSALLGLTIIFNTIFTLALSF). Residues 813 to 1065 (ITFQDLNYYV…CVIEYFQNIP (253 aa)) enclose the ABC transporter 2 domain. ATP is bound at residue 858–865 (GISGAGKT). In terms of domain architecture, ABC transmembrane type-2 2 spans 1138-1352 (EQFKSCLWKM…TLNLFFSSQY (215 aa)). The next 7 helical transmembrane spans lie at 1157–1177 (YNLMRIGHTFISSFIFGLLFW), 1189–1209 (LFTVLGAIYGLVLFVGINNCT), 1245–1265 (IPYIFIQSAEFVIVIYPMIGF), 1276–1296 (LYAMFCNLLCFNYLAMFLISI), 1302–1322 (VAAILQSLFFTTFNIFAGFLI), 1330–1350 (WWVWFYYITPTSWTLNLFFSS), and 1385–1405 (ITAIILIAFPIALATMYAFFV).

Belongs to the ABC transporter superfamily. ABCG family. PDR (TC 3.A.1.205) subfamily. In terms of tissue distribution, expressed in roots and stems.

Its subcellular location is the membrane. Its function is as follows. May be a general defense protein. This chain is ABC transporter G family member 33 (ABCG33), found in Arabidopsis thaliana (Mouse-ear cress).